Consider the following 21-residue polypeptide: Bombinin-H1/H3 (21 aa).

A D-allo-isoleucine; in form H3 modification is found at I2. I20 carries the post-translational modification Isoleucine amide.

The protein belongs to the bombinin family. Expressed by the skin glands.

The protein localises to the secreted. Its function is as follows. Has antimicrobial and hemolytic activities. The sequence is that of Bombinin-H1/H3 from Bombina variegata (Yellow-bellied toad).